The following is a 626-amino-acid chain: Ankyrin repeat domain-containing protein 13B (626 aa).

Methionine 1 is subject to N-acetylmethionine. ANK repeat units follow at residues 47-76 and 80-109; these read RGRT…DVGR and SGWT…YQRV. Residues 442 to 474 form a disordered region; sequence PVPSVRGSPSSETPSPGSDSSSVSSSSSTTSCR. The span at 449 to 472 shows a compositional bias: low complexity; sequence SPSSETPSPGSDSSSVSSSSSTTS. Positions 503 to 522 constitute a UIM 1 domain; that stretch reads DDDDLLQFAIQQSLLEAGSE. 2 disordered regions span residues 534–590 and 595–614; these read NSKP…DEQL and ELSA…EEEE. Residues 554–573 are compositionally biased toward pro residues; sequence PPTPQRQPAPPASVPSPRPS. 2 consecutive UIM domains span residues 585–604 and 610–626; these read SYDE…QEER and QEEE…LTEQ.

Interacts with EGFR (ubiquitinated); the interaction is direct and may regulate EGFR internalization.

It is found in the cell membrane. The protein resides in the late endosome. It localises to the early endosome. Functionally, ubiquitin-binding protein that specifically recognizes and binds 'Lys-63'-linked ubiquitin. Does not bind 'Lys-48'-linked ubiquitin. Positively regulates the internalization of ligand-activated EGFR by binding to the Ub moiety of ubiquitinated EGFR at the cell membrane. This is Ankyrin repeat domain-containing protein 13B (ANKRD13B) from Homo sapiens (Human).